Reading from the N-terminus, the 101-residue chain is Small ribosomal subunit protein uS14 (101 aa).

Belongs to the universal ribosomal protein uS14 family. Part of the 30S ribosomal subunit. Contacts proteins S3 and S10.

In terms of biological role, binds 16S rRNA, required for the assembly of 30S particles and may also be responsible for determining the conformation of the 16S rRNA at the A site. The chain is Small ribosomal subunit protein uS14 from Shewanella oneidensis (strain ATCC 700550 / JCM 31522 / CIP 106686 / LMG 19005 / NCIMB 14063 / MR-1).